We begin with the raw amino-acid sequence, 234 residues long: Large ribosomal subunit protein uL1 (234 aa).

Belongs to the universal ribosomal protein uL1 family. In terms of assembly, part of the 50S ribosomal subunit.

Functionally, binds directly to 23S rRNA. The L1 stalk is quite mobile in the ribosome, and is involved in E site tRNA release. Protein L1 is also a translational repressor protein, it controls the translation of the L11 operon by binding to its mRNA. This chain is Large ribosomal subunit protein uL1, found in Yersinia pseudotuberculosis serotype O:1b (strain IP 31758).